We begin with the raw amino-acid sequence, 1079 residues long: Alpha-mannosidase C (1079 aa).

The N-terminal stretch at 1–22 (MFYKTFGFLFIYLIILISGTLS) is a signal peptide. Zn(2+)-binding residues include histidine 44 and aspartate 46. Residues asparagine 60 and asparagine 96 are each glycosylated (N-linked (GlcNAc...) asparagine). Residue aspartate 158 participates in Zn(2+) binding. The Nucleophile role is filled by aspartate 158. N-linked (GlcNAc...) asparagine glycosylation is found at asparagine 192, asparagine 222, asparagine 248, and asparagine 467. Histidine 475 lines the Zn(2+) pocket. 10 N-linked (GlcNAc...) asparagine glycosylation sites follow: asparagine 516, asparagine 527, asparagine 589, asparagine 760, asparagine 769, asparagine 848, asparagine 872, asparagine 912, asparagine 1040, and asparagine 1057.

The protein belongs to the glycosyl hydrolase 38 family. Zn(2+) serves as cofactor.

It is found in the secreted. It carries out the reaction Hydrolysis of terminal, non-reducing alpha-D-mannose residues in alpha-D-mannosides.. In Dictyostelium discoideum (Social amoeba), this protein is Alpha-mannosidase C (manC).